Here is a 177-residue protein sequence, read N- to C-terminus: Large ribosomal subunit protein uL6 (177 aa).

Belongs to the universal ribosomal protein uL6 family. As to quaternary structure, part of the 50S ribosomal subunit.

Functionally, this protein binds to the 23S rRNA, and is important in its secondary structure. It is located near the subunit interface in the base of the L7/L12 stalk, and near the tRNA binding site of the peptidyltransferase center. The sequence is that of Large ribosomal subunit protein uL6 from Dichelobacter nodosus (strain VCS1703A).